Consider the following 180-residue polypeptide: NAD(P)H-quinone oxidoreductase subunit J (180 aa).

Positions Met-1–Gly-16 are enriched in polar residues. A disordered region spans residues Met-1 to Pro-23.

It belongs to the complex I 30 kDa subunit family. In terms of assembly, NDH-1 can be composed of about 15 different subunits; different subcomplexes with different compositions have been identified which probably have different functions.

The protein resides in the cellular thylakoid membrane. The catalysed reaction is a plastoquinone + NADH + (n+1) H(+)(in) = a plastoquinol + NAD(+) + n H(+)(out). It catalyses the reaction a plastoquinone + NADPH + (n+1) H(+)(in) = a plastoquinol + NADP(+) + n H(+)(out). In terms of biological role, NDH-1 shuttles electrons from an unknown electron donor, via FMN and iron-sulfur (Fe-S) centers, to quinones in the respiratory and/or the photosynthetic chain. The immediate electron acceptor for the enzyme in this species is believed to be plastoquinone. Couples the redox reaction to proton translocation, and thus conserves the redox energy in a proton gradient. Cyanobacterial NDH-1 also plays a role in inorganic carbon-concentration. In Prochlorococcus marinus (strain MIT 9211), this protein is NAD(P)H-quinone oxidoreductase subunit J.